The sequence spans 523 residues: Arabinose import ATP-binding protein AraG (523 aa).

2 consecutive ABC transporter domains span residues 20–255 and 268–511; these read LAFR…MVGR and IGSE…MLRT. 52-59 lines the ATP pocket; that stretch reads GENGAGKS.

It belongs to the ABC transporter superfamily. Arabinose importer (TC 3.A.1.2.2) family. The complex is composed of two ATP-binding proteins (AraG), two transmembrane proteins (AraH) and a solute-binding protein (AraF).

The protein resides in the cell inner membrane. The enzyme catalyses L-arabinose(out) + ATP + H2O = L-arabinose(in) + ADP + phosphate + H(+). Part of the ABC transporter complex AraFGH involved in arabinose import. Responsible for energy coupling to the transport system. The polypeptide is Arabinose import ATP-binding protein AraG (Yersinia pestis bv. Antiqua (strain Antiqua)).